The sequence spans 262 residues: Cap-specific mRNA (nucleoside-2'-O-)-methyltransferase (262 aa).

One can recognise a RrmJ-type SAM-dependent 2'-O-MTase domain in the interval 34–226; sequence TRRPRCWRKL…ERYLICFNKL (193 aa). 2 residues coordinate S-adenosyl-L-methionine: glycine 67 and aspartate 140. The active-site Proton acceptor is the lysine 180.

It carries out the reaction a 5'-end (N(7)-methyl 5'-triphosphoguanosine)-ribonucleoside in mRNA + S-adenosyl-L-methionine = a 5'-end (N(7)-methyl 5'-triphosphoguanosine)-(2'-O-methyl-ribonucleoside) in mRNA + S-adenosyl-L-homocysteine + H(+). Its function is as follows. S-adenosyl-L-methionine-dependent methyltransferase that mediates mRNA cap 2'-O-ribose methylation to the 5'-cap structure of late viral transcripts. The polypeptide is Cap-specific mRNA (nucleoside-2'-O-)-methyltransferase (Lepidoptera (butterflies and moths)).